Here is a 121-residue protein sequence, read N- to C-terminus: Tachykinin-3 (121 aa).

An N-terminal signal peptide occupies residues 1–16 (MRIMLLFTAILAFSLA). Positions 17–78 (QSFGAVCKEP…TDPKESTSPE (62 aa)) are excised as a propeptide. The residue at position 90 (M90) is a Methionine amide. Residues 93–121 (RSVQPDSPTDVNQENVPSFGILKYPPRAE) form a disordered region. The propeptide occupies 94–121 (SVQPDSPTDVNQENVPSFGILKYPPRAE). Positions 96 to 108 (QPDSPTDVNQENV) are enriched in polar residues.

The protein belongs to the tachykinin family.

The protein resides in the secreted. Functionally, tachykinins are active peptides which excite neurons, evoke behavioral responses, are potent vasodilators and secretagogues, and contract (directly or indirectly) many smooth muscles. Is a critical central regulator of gonadal function. The chain is Tachykinin-3 (TAC3) from Homo sapiens (Human).